A 567-amino-acid chain; its full sequence is Arginine--tRNA ligase (567 aa).

Positions 121–131 (ANPNGPLHVGH) match the 'HIGH' region motif.

This sequence belongs to the class-I aminoacyl-tRNA synthetase family.

Its subcellular location is the cytoplasm. The enzyme catalyses tRNA(Arg) + L-arginine + ATP = L-arginyl-tRNA(Arg) + AMP + diphosphate. The polypeptide is Arginine--tRNA ligase (Methanosarcina acetivorans (strain ATCC 35395 / DSM 2834 / JCM 12185 / C2A)).